A 548-amino-acid chain; its full sequence is Mercuric reductase (548 aa).

In terms of domain architecture, HMA spans 1–65; it reads MTEITVNGMT…AIAALGYQGS (65 aa). Cys11 and Cys14 together coordinate a metal cation. Residues Ala97, Gly117, and Thr122 each coordinate FAD. Cys123 and Cys128 are joined by a disulfide. Residues Lys132, Ala198, Asp390, and Val398 each coordinate FAD. Hg(2+) is bound by residues Cys545 and Cys546.

It belongs to the class-I pyridine nucleotide-disulfide oxidoreductase family. As to quaternary structure, homodimer. It depends on FAD as a cofactor.

It catalyses the reaction Hg + NADP(+) + H(+) = Hg(2+) + NADPH. In terms of biological role, resistance to Hg(2+) in bacteria appears to be governed by a specialized system which includes mercuric reductase. MerA protein is responsible for volatilizing mercury as Hg(0). This is Mercuric reductase (merA) from Pseudomonas fluorescens.